The chain runs to 308 residues: Aspartate carbamoyltransferase catalytic subunit (308 aa).

Carbamoyl phosphate-binding residues include Arg-57 and Thr-58. Lys-86 contributes to the L-aspartate binding site. Arg-107, His-135, and Gln-138 together coordinate carbamoyl phosphate. L-aspartate contacts are provided by Arg-167 and Arg-228. Residues Leu-267 and Pro-268 each coordinate carbamoyl phosphate.

Belongs to the aspartate/ornithine carbamoyltransferase superfamily. ATCase family. Heterooligomer of catalytic and regulatory chains.

It carries out the reaction carbamoyl phosphate + L-aspartate = N-carbamoyl-L-aspartate + phosphate + H(+). Its pathway is pyrimidine metabolism; UMP biosynthesis via de novo pathway; (S)-dihydroorotate from bicarbonate: step 2/3. Functionally, catalyzes the condensation of carbamoyl phosphate and aspartate to form carbamoyl aspartate and inorganic phosphate, the committed step in the de novo pyrimidine nucleotide biosynthesis pathway. The polypeptide is Aspartate carbamoyltransferase catalytic subunit (Methanococcoides burtonii (strain DSM 6242 / NBRC 107633 / OCM 468 / ACE-M)).